We begin with the raw amino-acid sequence, 197 residues long: Ras-related protein RabG2 (197 aa).

GTP contacts are provided by residues 13 to 20, 61 to 65, and 119 to 122; these read GDSAVGKT, DTAGQ, and NKCD. Residues 175 to 197 form a disordered region; it reads SKPSVVNPGSGGTSNTGGKKKFC. A lipid anchor (S-geranylgeranyl cysteine) is attached at C197.

The protein belongs to the small GTPase superfamily. Rab family.

The protein resides in the cell membrane. This is Ras-related protein RabG2 (rabG2) from Dictyostelium discoideum (Social amoeba).